Consider the following 426-residue polypeptide: Serine hydroxymethyltransferase (426 aa).

(6S)-5,6,7,8-tetrahydrofolate is bound by residues leucine 111 and 115-117; that span reads GHL. Lysine 220 is subject to N6-(pyridoxal phosphate)lysine.

It belongs to the SHMT family. In terms of assembly, homodimer. Requires pyridoxal 5'-phosphate as cofactor.

Its subcellular location is the cytoplasm. The enzyme catalyses (6R)-5,10-methylene-5,6,7,8-tetrahydrofolate + glycine + H2O = (6S)-5,6,7,8-tetrahydrofolate + L-serine. Its pathway is one-carbon metabolism; tetrahydrofolate interconversion. It participates in amino-acid biosynthesis; glycine biosynthesis; glycine from L-serine: step 1/1. Functionally, catalyzes the reversible interconversion of serine and glycine with tetrahydrofolate (THF) serving as the one-carbon carrier. This reaction serves as the major source of one-carbon groups required for the biosynthesis of purines, thymidylate, methionine, and other important biomolecules. Also exhibits THF-independent aldolase activity toward beta-hydroxyamino acids, producing glycine and aldehydes, via a retro-aldol mechanism. In Orientia tsutsugamushi (strain Ikeda) (Rickettsia tsutsugamushi), this protein is Serine hydroxymethyltransferase.